The following is a 528-amino-acid chain: MATRVEEAARGRGGGAEEATEAGRGGRRRSPRQKFEIGTMEEAGICGLGVKADMLCNSQSNDILQHQGSNCGGTSNKHSLEEDEGSDFITENRNLVSPAYCTQESREEIPGGEARTDPPDGQQDSECNRNKEKTLGKEVLLLMQALNTLSTPEEKLAALCKKYADLLEESRSVQKQMKILQKKQAQIVKEKVHLQSEHSKAILARSKLESLCRELQRHNKTLKEENMQQAREEEERRKEATAHFQITLNEIQAQLEQHDIHNAKLRQENIELGEKLKKLIEQYALREEHIDKVFKHKELQQQLVDAKLQQTTQLIKEADEKHQREREFLLKEATESRHKYEQMKQQEVQLKQQLSLYMDKFEEFQTTMAKSNELFTTFRQEMEKMTKKIKKLEKETIIWRTKWENNNKALLQMAEEKTVRDKEYKALQIKLERLEKLCRALQTERNELNEKVEVLKEQVSIKAAIKAANRDLATPVMQPCTALDSHKELNTSSKRALGAHLEAEPKSQRSAVQKPPSTGSAPAIESVD.

A compositionally biased stretch (basic and acidic residues) spans 1–10 (MATRVEEAAR). The interval 1–36 (MATRVEEAARGRGGGAEEATEAGRGGRRRSPRQKFE) is disordered. An omega-N-methylarginine mark is found at arginine 12 and arginine 24. 4 positions are modified to phosphoserine: serine 79, serine 86, serine 97, and serine 105. A disordered region spans residues 102 to 130 (TQESREEIPGGEARTDPPDGQQDSECNRN). Residues 104–118 (ESREEIPGGEARTDP) are compositionally biased toward basic and acidic residues. Positions 153 to 464 (EEKLAALCKK…LKEQVSIKAA (312 aa)) form a coiled coil. Residue tyrosine 283 is modified to Phosphotyrosine. The tract at residues 486–528 (HKELNTSSKRALGAHLEAEPKSQRSAVQKPPSTGSAPAIESVD) is disordered. Polar residues predominate over residues 508–520 (QRSAVQKPPSTGS). Position 517 is a phosphoserine (serine 517).

It belongs to the taxilin family. As to quaternary structure, binds to the C-terminal coiled coil region of syntaxin family members STX1A, STX3A and STX4A. Forms a heterodimer with ATF4 in osteoblasts. As to expression, ubiquitously expressed. Expressed at high level in heart and skeletal muscle. Expressed in brain, placenta, lung, liver, kidney and pancreas.

It is found in the nucleus membrane. The protein resides in the cytoplasm. The protein localises to the cytosol. May be involved in intracellular vesicle traffic. Inhibits ATF4-mediated transcription, possibly by dimerizing with ATF4 to form inactive dimers that cannot bind DNA. May be involved in regulating bone mass density through an ATF4-dependent pathway. May be involved in cell cycle progression. This chain is Gamma-taxilin (TXLNG), found in Homo sapiens (Human).